The following is a 160-amino-acid chain: Cytochrome b6-f complex subunit 4 (160 aa).

A run of 3 helical transmembrane segments spans residues L36–V56, L95–E115, and T131–I151.

The protein belongs to the cytochrome b family. PetD subfamily. The 4 large subunits of the cytochrome b6-f complex are cytochrome b6, subunit IV (17 kDa polypeptide, petD), cytochrome f and the Rieske protein, while the 4 small subunits are petG, petL, petM and petN. The complex functions as a dimer.

The protein resides in the plastid. Its subcellular location is the chloroplast thylakoid membrane. Component of the cytochrome b6-f complex, which mediates electron transfer between photosystem II (PSII) and photosystem I (PSI), cyclic electron flow around PSI, and state transitions. This is Cytochrome b6-f complex subunit 4 from Stigeoclonium helveticum (Green alga).